The following is a 396-amino-acid chain: L-lactate dehydrogenase (396 aa).

The FMN hydroxy acid dehydrogenase domain maps to 1-380 (MIISAASDYR…SGDSLVQELG (380 aa)). Substrate is bound at residue Tyr24. Residues Ser106 and Gln127 each contribute to the FMN site. Residue Tyr129 coordinates substrate. Residue Thr155 participates in FMN binding. Arg164 provides a ligand contact to substrate. Lys251 contributes to the FMN binding site. His275 functions as the Proton acceptor in the catalytic mechanism. Arg278 is a substrate binding site. 306–330 (DSGIRNGLDVVRMIALGADTVLLGR) lines the FMN pocket.

It belongs to the FMN-dependent alpha-hydroxy acid dehydrogenase family. Requires FMN as cofactor.

Its subcellular location is the cell inner membrane. It catalyses the reaction (S)-lactate + A = pyruvate + AH2. Catalyzes the conversion of L-lactate to pyruvate. Is coupled to the respiratory chain. This Salmonella schwarzengrund (strain CVM19633) protein is L-lactate dehydrogenase.